The chain runs to 328 residues: Hydrogenase-2 operon protein HybA (328 aa).

Residues Met-1–Ala-27 form the signal peptide. 3 4Fe-4S ferredoxin-type domains span residues Leu-38 to Gln-68, Asn-103 to Lys-134, and Gly-136 to Asn-165. [4Fe-4S] cluster-binding residues include Cys-47, Cys-50, Cys-53, Cys-57, Cys-112, Cys-115, Cys-120, Cys-124, Cys-145, Cys-148, Cys-151, Cys-155, Cys-174, Cys-177, Cys-193, and Cys-197.

The cofactor is [4Fe-4S] cluster.

It localises to the periplasm. In terms of biological role, participates in the periplasmic electron-transferring activity of hydrogenase 2 during its catalytic turnover. The chain is Hydrogenase-2 operon protein HybA (hybA) from Escherichia coli O157:H7.